A 339-amino-acid chain; its full sequence is MIINDAIKKLALREELTEDEVRGVINQIMKGEATSSQIGGFLVGLRVNGETPRQILGAVKAIRDNGVKVEIENTEHLIDTCGTGGDGSKTFNISTAVAIVAASGGAKVAKHGNRAVSSKSGCADVLVELGINIDFDEIQSKKIIEENGMAFLFAPKYNGAMKNVSKERKELGIRTIFNLLGPLANPAPITGQLMGVYDGALLKDIGEVLLNLGLKRAMIVHGDDGLDEITITTSTSICEVKDGKIKNYKLDPEKLGFKKATLDDIKGGEAKENAEIIIKILKGERGPKRDIVVLNSGAALYVANLVDSIEDGIKKASELIDSRAAYKKYEELSSLQVIV.

Residues Gly-82, Gly-85 to Asp-86, Thr-90, Asn-92 to Thr-95, and Lys-110 to Ser-118 contribute to the 5-phospho-alpha-D-ribose 1-diphosphate site. Gly-82 lines the anthranilate pocket. Ser-94 is a Mg(2+) binding site. Asn-113 and Arg-168 together coordinate anthranilate. Mg(2+) contacts are provided by Asp-227 and Glu-228.

The protein belongs to the anthranilate phosphoribosyltransferase family. In terms of assembly, homodimer. The cofactor is Mg(2+).

The catalysed reaction is N-(5-phospho-beta-D-ribosyl)anthranilate + diphosphate = 5-phospho-alpha-D-ribose 1-diphosphate + anthranilate. It participates in amino-acid biosynthesis; L-tryptophan biosynthesis; L-tryptophan from chorismate: step 2/5. In terms of biological role, catalyzes the transfer of the phosphoribosyl group of 5-phosphorylribose-1-pyrophosphate (PRPP) to anthranilate to yield N-(5'-phosphoribosyl)-anthranilate (PRA). The chain is Anthranilate phosphoribosyltransferase from Clostridium beijerinckii (strain ATCC 51743 / NCIMB 8052) (Clostridium acetobutylicum).